Here is a 117-residue protein sequence, read N- to C-terminus: Large ribosomal subunit protein bL20c (117 aa).

This sequence belongs to the bacterial ribosomal protein bL20 family.

It localises to the plastid. The protein localises to the chloroplast. In terms of biological role, binds directly to 23S ribosomal RNA and is necessary for the in vitro assembly process of the 50S ribosomal subunit. It is not involved in the protein synthesizing functions of that subunit. This Vitis vinifera (Grape) protein is Large ribosomal subunit protein bL20c.